The chain runs to 353 residues: UPF0283 membrane protein Spro_2618 (353 aa).

3 consecutive transmembrane segments (helical) span residues 71 to 91 (MVTA…VQWV), 101 to 121 (IAMG…GSVV), and 214 to 234 (ESTL…FIAW).

Belongs to the UPF0283 family.

Its subcellular location is the cell inner membrane. The sequence is that of UPF0283 membrane protein Spro_2618 from Serratia proteamaculans (strain 568).